The following is a 204-amino-acid chain: MRLRISEAVVLFLLGAVAALIGDHSHVVTGTTVYHTDAVPFVWSSPFWFPILVGAATASLAELRLHLPAPRDGVTARQALGGVAAVVGTYVTTALVHAFPVVPVTALVCAAAAITWCVLGDGPGAACGVVIAVIGPAVEIALVQLGVFAYHPDSDGLFGVAPFLAPLYFAFGVVAALLGELAVARRPQLGPPVCDTVSRGPGAG.

Helical transmembrane passes span 5–27, 47–64, 76–97, 101–118, and 124–145; these read ISEA…HSHV, FWFP…AELR, ARQA…ALVH, VVPV…TWCV, and GAAC…LVQL. Histidine 26 contributes to the a 1,2-diacyl-sn-glycerol binding site. Tyrosine 150 contacts a 1,2-diacyl-sn-glycerol. The helical transmembrane segment at 162-179 threads the bilayer; it reads PFLAPLYFAFGVVAALLG.

The protein belongs to the INSIG family. As to quaternary structure, homotrimer.

It is found in the membrane. Its function is as follows. Diacylglycerol-binding protein. The polypeptide is INSIG protein homolog (Mycolicibacterium vanbaalenii (strain DSM 7251 / JCM 13017 / BCRC 16820 / KCTC 9966 / NRRL B-24157 / PYR-1) (Mycobacterium vanbaalenii)).